The following is a 461-amino-acid chain: Homocitrate synthase (461 aa).

One can recognise a Pyruvate carboxyltransferase domain in the interval 4 to 259 (VGILDSTLRE…IEVVKLDKLQ (256 aa)). Arg-12 provides a ligand contact to 2-oxoglutarate. Glu-13 lines the Mg(2+) pocket. Residues His-76, Arg-136, and Thr-170 each contribute to the 2-oxoglutarate site. Mg(2+)-binding residues include His-198 and His-200. The active-site Proton acceptor is His-292.

Belongs to the alpha-IPM synthase/homocitrate synthase family. Homocitrate synthase LYS20/LYS21 subfamily. Requires Mg(2+) as cofactor. The cofactor is Mn(2+).

The enzyme catalyses acetyl-CoA + 2-oxoglutarate + H2O = (2R)-homocitrate + CoA + H(+). It functions in the pathway amino-acid biosynthesis; L-lysine biosynthesis via AAA pathway; L-alpha-aminoadipate from 2-oxoglutarate: step 1/5. Its function is as follows. Catalyzes the aldol-type condensation of 2-oxoglutarate with acetyl-CoA to yield homocitrate. Carries out the first step of the alpha-aminoadipate (AAA) lysine biosynthesis pathway. The protein is Homocitrate synthase of Saccharolobus islandicus (strain Y.N.15.51 / Yellowstone #2) (Sulfolobus islandicus).